Here is a 717-residue protein sequence, read N- to C-terminus: Polyribonucleotide nucleotidyltransferase (717 aa).

The Mg(2+) site is built by aspartate 496 and aspartate 502. One can recognise a KH domain in the interval 563–622; that stretch reads PRLLTIKIDPDLIGLVIGPGGKTVKGITEQTGTKIDIDDDGTVTISSTDGEQAEKAKRLI. The region spanning 632–700 is the S1 motif domain; the sequence is GEVYLGRVTR…SKGRLNLTRL (69 aa).

This sequence belongs to the polyribonucleotide nucleotidyltransferase family. Mg(2+) serves as cofactor.

The protein resides in the cytoplasm. It catalyses the reaction RNA(n+1) + phosphate = RNA(n) + a ribonucleoside 5'-diphosphate. Involved in mRNA degradation. Catalyzes the phosphorolysis of single-stranded polyribonucleotides processively in the 3'- to 5'-direction. This Microcystis aeruginosa (strain NIES-843 / IAM M-2473) protein is Polyribonucleotide nucleotidyltransferase.